The primary structure comprises 430 residues: Inactive metallocarboxypeptidase ECM14 (430 aa).

Positions 1 to 24 (MLHMNSLWGCFLFVLLAVTGAVQG) are cleaved as a signal peptide. Positions 25–105 (LQEDYSEYAV…TLPTSQMMAR (81 aa)) are excised as a propeptide. N-linked (GlcNAc...) asparagine glycosylation is present at N41. In terms of domain architecture, Peptidase M14 spans 120–425 (EYRDLDTIYM…AALKYFCDFL (306 aa)). Residues H182 and E185 each coordinate Zn(2+). Residues 182–185 (HARE), R240, and 257–258 (DH) contribute to the substrate site. C251 and C272 form a disulfide bridge. N-linked (GlcNAc...) asparagine glycosylation is present at N295. H310 provides a ligand contact to Zn(2+). Substrate is bound at residue 311–312 (SY).

It belongs to the peptidase M14 family. It depends on Zn(2+) as a cofactor. In terms of processing, N-glycosylated.

Its subcellular location is the vacuole. The protein localises to the secreted. Its function is as follows. Inactive carboxypeptidase that may play a role in cell wall organization and biogenesis. This Saccharomyces cerevisiae (strain ATCC 204508 / S288c) (Baker's yeast) protein is Inactive metallocarboxypeptidase ECM14.